A 689-amino-acid chain; its full sequence is Outer spore wall assembly protein SHE10 (689 aa).

Residues 1 to 18 form the signal peptide; sequence MKILTKFFLLLVVTTCSL. A disordered region spans residues 259–308; that stretch reads TKAKSKSKPRVNASASARGNARAGAKAGAKAGTSEISASATADPTTSASA. Residues 270–308 show a composition bias toward low complexity; that stretch reads NASASARGNARAGAKAGAKAGTSEISASATADPTTSASA. A coiled-coil region spans residues 406–435; that stretch reads NKTKTVSEVLQNRYKNLNRAIQDINCTCET. Residues 610–626 are compositionally biased toward basic and acidic residues; the sequence is EQESKQREDSPRMDRDS. The tract at residues 610–689 is disordered; the sequence is EQESKQREDS…TVQNNVTLQI (80 aa). Polar residues-rich tracts occupy residues 627 to 637, 655 to 670, and 677 to 689; these read TQNVENSNTTT, QNGT…GPDS, and METT…TLQI.

This sequence belongs to the SHE10 family. In terms of assembly, component of the mitochondria-localized RNase mitochondrial RNA-processing (RNase MRP) composed of one single RNA encoded by the NME1 gene and at least 31 proteins. Absent in the nucleus-localized RNase MRP (NuMRP).

It localises to the mitochondrion. Functionally, involved in spore wall assembly. May be a component of the mitochondrial RNase MRP (MtMRP), a ribonucleoprotein endoribonuclease involved in the cleaving RNA transcripts to generate primers for DNA replication in mitochondria. This chain is Outer spore wall assembly protein SHE10, found in Zygosaccharomyces rouxii (strain ATCC 2623 / CBS 732 / NBRC 1130 / NCYC 568 / NRRL Y-229).